Reading from the N-terminus, the 359-residue chain is Histidinol-phosphate aminotransferase (359 aa).

Lys-217 is modified (N6-(pyridoxal phosphate)lysine).

The protein belongs to the class-II pyridoxal-phosphate-dependent aminotransferase family. Histidinol-phosphate aminotransferase subfamily. As to quaternary structure, homodimer. Pyridoxal 5'-phosphate serves as cofactor.

It carries out the reaction L-histidinol phosphate + 2-oxoglutarate = 3-(imidazol-4-yl)-2-oxopropyl phosphate + L-glutamate. It functions in the pathway amino-acid biosynthesis; L-histidine biosynthesis; L-histidine from 5-phospho-alpha-D-ribose 1-diphosphate: step 7/9. This is Histidinol-phosphate aminotransferase from Roseobacter denitrificans (strain ATCC 33942 / OCh 114) (Erythrobacter sp. (strain OCh 114)).